Consider the following 130-residue polypeptide: Sirohydrochlorin cobaltochelatase (130 aa).

His12 serves as the catalytic Proton acceptor. Co(2+) is bound at residue His12. His12 contributes to the Ni(2+) binding site. Residues Glu48 and 73 to 78 (LASGVH) contribute to the substrate site. His78 contacts Co(2+). His78 contacts Ni(2+).

Belongs to the CbiX family. CbiXS subfamily. Homotetramer; dimer of dimers.

The catalysed reaction is Co-sirohydrochlorin + 2 H(+) = sirohydrochlorin + Co(2+). The enzyme catalyses Ni-sirohydrochlorin + 2 H(+) = sirohydrochlorin + Ni(2+). It functions in the pathway cofactor biosynthesis; adenosylcobalamin biosynthesis; cob(II)yrinate a,c-diamide from sirohydrochlorin (anaerobic route): step 1/10. Catalyzes the insertion of Co(2+) into sirohydrochlorin as part of the anaerobic pathway to cobalamin biosynthesis. Involved in the biosynthesis of the unique nickel-containing tetrapyrrole coenzyme F430, the prosthetic group of methyl-coenzyme M reductase (MCR), which plays a key role in methanogenesis and anaerobic methane oxidation. Catalyzes the insertion of Ni(2+) into sirohydrochlorin to yield Ni-sirohydrochlorin. The protein is Sirohydrochlorin cobaltochelatase of Methanosarcina barkeri (strain Fusaro / DSM 804).